The sequence spans 566 residues: Proline--tRNA ligase (566 aa).

Belongs to the class-II aminoacyl-tRNA synthetase family. ProS type 1 subfamily. Homodimer.

Its subcellular location is the cytoplasm. It catalyses the reaction tRNA(Pro) + L-proline + ATP = L-prolyl-tRNA(Pro) + AMP + diphosphate. Its function is as follows. Catalyzes the attachment of proline to tRNA(Pro) in a two-step reaction: proline is first activated by ATP to form Pro-AMP and then transferred to the acceptor end of tRNA(Pro). As ProRS can inadvertently accommodate and process non-cognate amino acids such as alanine and cysteine, to avoid such errors it has two additional distinct editing activities against alanine. One activity is designated as 'pretransfer' editing and involves the tRNA(Pro)-independent hydrolysis of activated Ala-AMP. The other activity is designated 'posttransfer' editing and involves deacylation of mischarged Ala-tRNA(Pro). The misacylated Cys-tRNA(Pro) is not edited by ProRS. This chain is Proline--tRNA ligase, found in Staphylococcus saprophyticus subsp. saprophyticus (strain ATCC 15305 / DSM 20229 / NCIMB 8711 / NCTC 7292 / S-41).